A 256-amino-acid polypeptide reads, in one-letter code: Probable succinate transporter subunit YjjP (256 aa).

Over 1–113 (MQTEQQRAVT…KRFSQIQPLR (113 aa)) the chain is Cytoplasmic. A helical membrane pass occupies residues 114 to 135 (YPRWLVALMVGLSCACFCKLNN). The Periplasmic segment spans residues 136–140 (GGWDG). The chain crosses the membrane as a helical span at residues 141–158 (AVITFFASTTAMYIRQLL). Over 159–168 (AQRHLHPQIN) the chain is Cytoplasmic. A helical membrane pass occupies residues 169 to 189 (FCLTAFAATTISGLLLQLPTF). At 190 to 194 (SNTPT) the chain is on the periplasmic side. The helical transmembrane segment at 195-215 (IAMAASVLLLVPGFPLINAVA) threads the bilayer. At 216 to 228 (DMFKGHINTGLAR) the chain is on the cytoplasmic side. A helical transmembrane segment spans residues 229–249 (WAIASLLTLATCVGVVMALTI). Over 250–256 (WGLRGWV) the chain is Periplasmic.

It belongs to the ThrE exporter (TC 2.A.79) family. The transporter is composed of YjjB and YjjP.

The protein localises to the cell inner membrane. In terms of biological role, involved in succinate export with YjjB. Both proteins are required for export. Contributes to succinate production under both aerobic and anaerobic conditions. This Escherichia coli (strain K12) protein is Probable succinate transporter subunit YjjP (yjjP).